The chain runs to 380 residues: Queuine tRNA-ribosyltransferase (380 aa).

Residue D96 is the Proton acceptor of the active site. Residues D96–F100, D150, Q193, and G220 contribute to the substrate site. Positions G251 to S257 are RNA binding. Residue D270 is the Nucleophile of the active site. The RNA binding; important for wobble base 34 recognition stretch occupies residues T275–R279. Positions 308, 310, 313, and 339 each coordinate Zn(2+).

It belongs to the queuine tRNA-ribosyltransferase family. Homodimer. Within each dimer, one monomer is responsible for RNA recognition and catalysis, while the other monomer binds to the replacement base PreQ1. Zn(2+) is required as a cofactor.

The catalysed reaction is 7-aminomethyl-7-carbaguanine + guanosine(34) in tRNA = 7-aminomethyl-7-carbaguanosine(34) in tRNA + guanine. It functions in the pathway tRNA modification; tRNA-queuosine biosynthesis. In terms of biological role, catalyzes the base-exchange of a guanine (G) residue with the queuine precursor 7-aminomethyl-7-deazaguanine (PreQ1) at position 34 (anticodon wobble position) in tRNAs with GU(N) anticodons (tRNA-Asp, -Asn, -His and -Tyr). Catalysis occurs through a double-displacement mechanism. The nucleophile active site attacks the C1' of nucleotide 34 to detach the guanine base from the RNA, forming a covalent enzyme-RNA intermediate. The proton acceptor active site deprotonates the incoming PreQ1, allowing a nucleophilic attack on the C1' of the ribose to form the product. After dissociation, two additional enzymatic reactions on the tRNA convert PreQ1 to queuine (Q), resulting in the hypermodified nucleoside queuosine (7-(((4,5-cis-dihydroxy-2-cyclopenten-1-yl)amino)methyl)-7-deazaguanosine). In Streptococcus equi subsp. zooepidemicus (strain H70), this protein is Queuine tRNA-ribosyltransferase.